Reading from the N-terminus, the 363-residue chain is Uptake hydrogenase small subunit (363 aa).

The segment at residues Met1 to Ala43 is a signal peptide (tat-type signal). Residues Cys60, Cys63, Cys158, Cys192, His230, Cys233, Cys258, and Cys264 each contribute to the [4Fe-4S] cluster site. Cys273, Cys292, and Cys295 together coordinate [3Fe-4S] cluster.

It belongs to the [NiFe]/[NiFeSe] hydrogenase small subunit family. Heterodimer of a large and a small subunit. Requires [4Fe-4S] cluster as cofactor. It depends on [3Fe-4S] cluster as a cofactor. Predicted to be exported by the Tat system. The position of the signal peptide cleavage has not been experimentally proven.

It is found in the cell membrane. It carries out the reaction H2 + A = AH2. Its function is as follows. This enzyme recycles the H(2) produced by nitrogenase to increase the production of ATP and to protect nitrogenase against inhibition or damage by O(2) under carbon- or phosphate-limited conditions. This Alcaligenes hydrogenophilus protein is Uptake hydrogenase small subunit (hupS).